The sequence spans 218 residues: Cytochrome b6 (218 aa).

A helical transmembrane segment spans residues 35 to 55; sequence IFYCLGGITLVCFLVQFATGF. Residue C38 participates in heme c binding. Heme b contacts are provided by H89 and H103. The next 3 helical transmembrane spans lie at 93-113, 119-139, and 189-209; these read ASMM…TGGF, LTWV…VTGY, and LHTF…FLMI. Heme b-binding residues include H190 and H205.

It belongs to the cytochrome b family. PetB subfamily. As to quaternary structure, the 4 large subunits of the cytochrome b6-f complex are cytochrome b6, subunit IV (17 kDa polypeptide, PetD), cytochrome f and the Rieske protein, while the 4 small subunits are PetG, PetL, PetM and PetN. The complex functions as a dimer. Heme b serves as cofactor. The cofactor is heme c.

The protein localises to the cellular thylakoid membrane. In terms of biological role, component of the cytochrome b6-f complex, which mediates electron transfer between photosystem II (PSII) and photosystem I (PSI), cyclic electron flow around PSI, and state transitions. This is Cytochrome b6 from Prochlorococcus marinus (strain MIT 9303).